Reading from the N-terminus, the 534-residue chain is CD276 antigen (534 aa).

The signal sequence occupies residues 1-28 (MLRRRGSPGMGVHVGAALGALWFCLTGA). Positions 29–139 (LEVQVPEDPV…GSAAVSLQVA (111 aa)) constitute an Ig-like V-type 1 domain. Over 29–466 (LEVQVPEDPV…GQPMTFPPEA (438 aa)) the chain is Extracellular. Disulfide bonds link cysteine 50–cysteine 122, cysteine 165–cysteine 220, cysteine 268–cysteine 340, and cysteine 383–cysteine 438. Asparagine 104, asparagine 189, asparagine 215, asparagine 322, asparagine 407, and asparagine 433 each carry an N-linked (GlcNAc...) asparagine glycan. In terms of domain architecture, Ig-like C2-type 1 spans 145-238 (PSMTLEPNKD…QDAHSSVTIT (94 aa)). The 115-residue stretch at 243 to 357 (PTGAVEVQVP…GSAAVSLQVA (115 aa)) folds into the Ig-like V-type 2 domain. The Ig-like C2-type 2 domain occupies 363-456 (PSMTLEPNKD…QDAHGSVTIT (94 aa)). Residues 467 to 487 (LWVTVGLSVCLIALLVALAFV) form a helical membrane-spanning segment. The Cytoplasmic segment spans residues 488–534 (CWRKIKQSCEEENAGAEDQDGEGEGSKTALQPLKHSDSKEDDGQEIA). Residues 498–510 (EENAGAEDQDGEG) show a composition bias toward acidic residues. The segment at 498-534 (EENAGAEDQDGEGEGSKTALQPLKHSDSKEDDGQEIA) is disordered. Serine 525 is subject to Phosphoserine.

Belongs to the immunoglobulin superfamily. BTN/MOG family. In terms of assembly, interacts with TREML2 and this interaction enhances T-cell activation. Ubiquitous but not detectable in peripheral blood lymphocytes or granulocytes. Weakly expressed in resting monocytes. Expressed in dendritic cells derived from monocytes. Expressed in epithelial cells of sinonasal tissue. Expressed in extravillous trophoblast cells and Hofbauer cells of the first trimester placenta and term placenta.

The protein resides in the membrane. In terms of biological role, may participate in the regulation of T-cell-mediated immune response. May play a protective role in tumor cells by inhibiting natural-killer mediated cell lysis as well as a role of marker for detection of neuroblastoma cells. May be involved in the development of acute and chronic transplant rejection and in the regulation of lymphocytic activity at mucosal surfaces. Could also play a key role in providing the placenta and fetus with a suitable immunological environment throughout pregnancy. Both isoform 1 and isoform 2 appear to be redundant in their ability to modulate CD4 T-cell responses. Isoform 2 is shown to enhance the induction of cytotoxic T-cells and selectively stimulates interferon gamma production in the presence of T-cell receptor signaling. In Homo sapiens (Human), this protein is CD276 antigen (CD276).